Reading from the N-terminus, the 439-residue chain is NAD-dependent malic enzyme 1 (439 aa).

In terms of domain architecture, ACT spans T9–E84. Y112 acts as the Proton donor in catalysis. K167 acts as the Proton acceptor in catalysis. Positions 209, 210, and 235 each coordinate a divalent metal cation. Residues L268 to A271, N347, and N373 contribute to the NAD(+) site.

This sequence belongs to the malic enzymes family. Mg(2+) is required as a cofactor. It depends on Mn(2+) as a cofactor.

It carries out the reaction (S)-malate + NAD(+) = pyruvate + CO2 + NADH. The catalysed reaction is oxaloacetate + H(+) = pyruvate + CO2. In terms of biological role, catalyzes the decarboxylation of malate to pyruvate. Is specific for NAD, cannot use NADP. Can also catalyze the decarboxylation of oxaloacetate. Involved in keeping the ATP levels high. This is NAD-dependent malic enzyme 1 from Bacillus subtilis (strain 168).